A 421-amino-acid polypeptide reads, in one-letter code: Imidazolonepropionase (421 aa).

Fe(3+)-binding residues include His-80 and His-82. Residues His-80 and His-82 each contribute to the Zn(2+) site. The 4-imidazolone-5-propanoate site is built by Arg-89, Tyr-152, and His-185. Position 152 (Tyr-152) interacts with N-formimidoyl-L-glutamate. Residue His-249 participates in Fe(3+) binding. His-249 provides a ligand contact to Zn(2+). 4-imidazolone-5-propanoate is bound at residue Glu-252. Asp-324 is a Fe(3+) binding site. Residue Asp-324 participates in Zn(2+) binding. N-formimidoyl-L-glutamate contacts are provided by Asn-326 and Gly-328. Ser-329 contributes to the 4-imidazolone-5-propanoate binding site.

It belongs to the metallo-dependent hydrolases superfamily. HutI family. The cofactor is Zn(2+). Fe(3+) serves as cofactor.

It is found in the cytoplasm. The catalysed reaction is 4-imidazolone-5-propanoate + H2O = N-formimidoyl-L-glutamate. Its pathway is amino-acid degradation; L-histidine degradation into L-glutamate; N-formimidoyl-L-glutamate from L-histidine: step 3/3. Catalyzes the hydrolytic cleavage of the carbon-nitrogen bond in imidazolone-5-propanoate to yield N-formimidoyl-L-glutamate. It is the third step in the universal histidine degradation pathway. This chain is Imidazolonepropionase, found in Bacillus velezensis (strain DSM 23117 / BGSC 10A6 / LMG 26770 / FZB42) (Bacillus amyloliquefaciens subsp. plantarum).